The sequence spans 178 residues: uncharacterized protein (178 aa).

This is an uncharacterized protein from Bacillus subtilis (strain 168).